Here is a 729-residue protein sequence, read N- to C-terminus: Phosphoribosylformylglycinamidine synthase subunit PurL (729 aa).

His54 is an active-site residue. 2 residues coordinate ATP: Tyr57 and Lys96. Glu98 lines the Mg(2+) pocket. Substrate-binding positions include 99–102 (SHNH) and Arg121. His100 (proton acceptor) is an active-site residue. Position 122 (Asp122) interacts with Mg(2+). Substrate is bound at residue Gln245. Asp273 is a Mg(2+) binding site. 317–319 (ETQ) is a binding site for substrate. 2 residues coordinate ATP: Asp495 and Gly532. Asn533 is a binding site for Mg(2+). Ser535 provides a ligand contact to substrate.

It belongs to the FGAMS family. In terms of assembly, monomer. Part of the FGAM synthase complex composed of 1 PurL, 1 PurQ and 2 PurS subunits.

It localises to the cytoplasm. It catalyses the reaction N(2)-formyl-N(1)-(5-phospho-beta-D-ribosyl)glycinamide + L-glutamine + ATP + H2O = 2-formamido-N(1)-(5-O-phospho-beta-D-ribosyl)acetamidine + L-glutamate + ADP + phosphate + H(+). Its pathway is purine metabolism; IMP biosynthesis via de novo pathway; 5-amino-1-(5-phospho-D-ribosyl)imidazole from N(2)-formyl-N(1)-(5-phospho-D-ribosyl)glycinamide: step 1/2. Its function is as follows. Part of the phosphoribosylformylglycinamidine synthase complex involved in the purines biosynthetic pathway. Catalyzes the ATP-dependent conversion of formylglycinamide ribonucleotide (FGAR) and glutamine to yield formylglycinamidine ribonucleotide (FGAM) and glutamate. The FGAM synthase complex is composed of three subunits. PurQ produces an ammonia molecule by converting glutamine to glutamate. PurL transfers the ammonia molecule to FGAR to form FGAM in an ATP-dependent manner. PurS interacts with PurQ and PurL and is thought to assist in the transfer of the ammonia molecule from PurQ to PurL. The polypeptide is Phosphoribosylformylglycinamidine synthase subunit PurL (Staphylococcus aureus (strain USA300)).